The chain runs to 88 residues: MIKNAFISFQEQKEESRGSVEFQVFIFTNKIRRLTSHLELHRKDYLSQRGLRKILGKRQRLLAYLSKKNRVRYKELINQLNIRELKTR.

It belongs to the universal ribosomal protein uS15 family. Part of the 30S ribosomal subunit.

It localises to the plastid. Its subcellular location is the chloroplast. The sequence is that of Small ribosomal subunit protein uS15c (rps15) from Lepidium virginicum (Virginia pepperweed).